A 519-amino-acid polypeptide reads, in one-letter code: Threonine synthase, chloroplastic (519 aa).

The N-terminal 40 residues, 1 to 40 (MAASCMLRSSFISPGLPQLHHQSTSKPNNGIHFFTPIKAT), are a transit peptide targeting the chloroplast. Lys196 bears the N6-(pyridoxal phosphate)lysine mark. Pyridoxal 5'-phosphate is bound by residues 328 to 332 (GNLGN) and Thr465.

The protein belongs to the threonine synthase family. In terms of assembly, homodimer. Pyridoxal 5'-phosphate is required as a cofactor.

It is found in the plastid. The protein resides in the chloroplast. It carries out the reaction O-phospho-L-homoserine + H2O = L-threonine + phosphate. It functions in the pathway amino-acid biosynthesis; L-threonine biosynthesis; L-threonine from L-aspartate: step 5/5. With respect to regulation, allosterically activated by S-adenosyl-methionine (SAM). Its function is as follows. Catalyzes the gamma-elimination of phosphate from L-phosphohomoserine and the beta-addition of water to produce L-threonine. This Solanum tuberosum (Potato) protein is Threonine synthase, chloroplastic.